The primary structure comprises 151 residues: Large ribosomal subunit protein eL8 (151 aa).

Belongs to the eukaryotic ribosomal protein eL8 family. In terms of assembly, part of the 50S ribosomal subunit. Probably part of the RNase P complex.

Its subcellular location is the cytoplasm. Its function is as follows. Multifunctional RNA-binding protein that recognizes the K-turn motif in ribosomal RNA, the RNA component of RNase P, box H/ACA, box C/D and box C'/D' sRNAs. The protein is Large ribosomal subunit protein eL8 of Pyrobaculum aerophilum (strain ATCC 51768 / DSM 7523 / JCM 9630 / CIP 104966 / NBRC 100827 / IM2).